The primary structure comprises 121 residues: Securin (121 aa).

Residues 1-24 (RATEKSVKTNGPLKQKQTTFSAKK) are disordered. 2 short sequence motifs (TEK-box) span residues 3-5 (TEK) and 26-28 (TEK). The disordered stretch occupies residues 93–121 (LGPPSPLNMPSPPWESDVLQSPSSILSTL). Residues 95–105 (PPSPLNMPSPP) carry the SH3-binding motif. Positions 95 to 105 (PPSPLNMPSPP) are enriched in pro residues. S97 carries the phosphoserine; by CDK1 modification. Residues 110–121 (VLQSPSSILSTL) show a composition bias toward polar residues.

Belongs to the securin family. In terms of assembly, interacts with the caspase-like ESPL1, and prevents its protease activity probably by covering its active site. Interacts with p53/TP53 and blocks its activity probably by blocking its binding to DNA. Interacts with the Ku 70 kDa subunit of ds-DNA kinase. Interacts with PTTG1IP. Interacts with RPS10 and DNAJA1. Phosphorylated by CDK1 during mitosis. Post-translationally, phosphorylated in vitro by ds-DNA kinase. In terms of processing, ubiquitinated through 'Lys-11' linkage of ubiquitin moieties by the anaphase promoting complex (APC) at the onset of anaphase, conducting to its degradation. 'Lys-11'-linked ubiquitination is mediated by the E2 ligase UBE2C/UBCH10.

It is found in the cytoplasm. The protein localises to the nucleus. Regulatory protein, which plays a central role in chromosome stability, in the p53/TP53 pathway, and DNA repair. Probably acts by blocking the action of key proteins. During the mitosis, it blocks Separase/ESPL1 function, preventing the proteolysis of the cohesin complex and the subsequent segregation of the chromosomes. At the onset of anaphase, it is ubiquitinated, conducting to its destruction and to the liberation of ESPL1. Its function is however not limited to a blocking activity, since it is required to activate ESPL1. Negatively regulates the transcriptional activity and related apoptosis activity of p53/TP53. The negative regulation of p53/TP53 may explain the strong transforming capability of the protein when it is overexpressed. May also play a role in DNA repair via its interaction with Ku, possibly by connecting DNA damage-response pathways with sister chromatid separation. The protein is Securin (PTTG1) of Sus scrofa (Pig).